We begin with the raw amino-acid sequence, 176 residues long: Protein MOTHER of FT and TFL1 homolog 1 (176 aa).

Belongs to the phosphatidylethanolamine-binding protein family.

May form complexes with phosphorylated ligands by interfering with kinases and their effectors. The polypeptide is Protein MOTHER of FT and TFL1 homolog 1 (Oryza sativa subsp. japonica (Rice)).